Reading from the N-terminus, the 503-residue chain is Aminoaldehyde dehydrogenase 2, peroxisomal (503 aa).

The Na(+) site is built by Ile28, Asp99, and Leu189. Residue 238–245 (GSTMTGSK) participates in NAD(+) binding. The active-site Proton acceptor is the Glu260. Cys294 and Glu393 together coordinate NAD(+). Residue Cys294 is the Nucleophile of the active site. The Microbody targeting signal motif lies at 501 to 503 (SKL).

Belongs to the aldehyde dehydrogenase family. Expressed in leaves, flowers and fruits.

It is found in the peroxisome. The catalysed reaction is 4-aminobutanal + NAD(+) + H2O = 4-aminobutanoate + NADH + 2 H(+). The enzyme catalyses 3-aminopropanal + NAD(+) + H2O = beta-alanine + NADH + 2 H(+). It functions in the pathway amine and polyamine biosynthesis; betaine biosynthesis via choline pathway; betaine from betaine aldehyde: step 1/1. Dehydrogenase that catalyzes the oxidation of several aminoaldehydes. Metabolizes and detoxifies aldehyde products of polyamine degradation to non-toxic amino acids. Catalyzes the oxidation of 4-aminobutanal and 3-aminopropanal to 4-aminobutanoate and beta-alanine, respectively. In Malus domestica (Apple), this protein is Aminoaldehyde dehydrogenase 2, peroxisomal.